We begin with the raw amino-acid sequence, 561 residues long: uncharacterized protein (561 aa).

Residues 314–323 (ANNGSGDSSS) are compositionally biased toward low complexity. The tract at residues 314 to 366 (ANNGSGDSSSTALNNESPNTTPKSRTFFSPKGHRRNSSHVSSLTSRSTKKPIT) is disordered. Positions 324–340 (TALNNESPNTTPKSRTF) are enriched in polar residues. Serine 514 is modified (phosphoserine).

Its subcellular location is the cytoplasm. This is an uncharacterized protein from Saccharomyces cerevisiae (strain ATCC 204508 / S288c) (Baker's yeast).